Consider the following 610-residue polypeptide: Phosphoenolpyruvate carboxykinase [GTP] (610 aa).

Substrate-binding positions include Arg-82 and 221 to 223; that span reads YGG. Lys-230 and His-250 together coordinate Mn(2+). Ser-272 contacts substrate. Residue 273 to 278 coordinates GTP; it reads ACGKTN. The active site involves Cys-274. Asp-297 contacts Mn(2+). 387 to 389 contacts substrate; the sequence is NSR. Residues Arg-389, Arg-420, and 515–518 each bind GTP; that span reads FGDN.

The protein belongs to the phosphoenolpyruvate carboxykinase [GTP] family. In terms of assembly, monomer. The cofactor is Mn(2+).

Its subcellular location is the cytoplasm. It carries out the reaction oxaloacetate + GTP = phosphoenolpyruvate + GDP + CO2. It participates in carbohydrate biosynthesis; gluconeogenesis. Catalyzes the conversion of oxaloacetate (OAA) to phosphoenolpyruvate (PEP), the rate-limiting step in the metabolic pathway that produces glucose from lactate and other precursors derived from the citric acid cycle. This chain is Phosphoenolpyruvate carboxykinase [GTP], found in Corynebacterium glutamicum (strain R).